The sequence spans 465 residues: GTPase Der (465 aa).

2 consecutive EngA-type G domains span residues 3-167 (PLVA…PERS) and 179-352 (IHIA…VSAL). Residues 9 to 16 (GRPNVGKS), 57 to 61 (DTGGM), 119 to 122 (NKID), 185 to 192 (GRPNVGKS), 232 to 236 (DTAGL), and 297 to 300 (NKWD) each bind GTP. A KH-like domain is found at 353 to 437 (RQFSTSEVNK…PVRFLFREGD (85 aa)).

This sequence belongs to the TRAFAC class TrmE-Era-EngA-EngB-Septin-like GTPase superfamily. EngA (Der) GTPase family. As to quaternary structure, associates with the 50S ribosomal subunit.

GTPase that plays an essential role in the late steps of ribosome biogenesis. This chain is GTPase Der, found in Xylella fastidiosa (strain M12).